A 93-amino-acid polypeptide reads, in one-letter code: MEPVDPELEPWNHPGSQPKTACNNCHCKVCCYHCVYCFTKKGLGISYGRKKRSQRRRTPQSNKSHQDPLPKQPLSQRLGDQTGQKEQKKTLES.

The tract at residues 1-24 (MEPVDPELEPWNHPGSQPKTACNN) is interaction with human CREBBP. The transactivation stretch occupies residues 1–48 (MEPVDPELEPWNHPGSQPKTACNNCHCKVCCYHCVYCFTKKGLGISYG). Positions 22, 25, and 27 each coordinate Zn(2+). The cysteine-rich stretch occupies residues 22–37 (CNNCHCKVCCYHCVYC). Position 28 is an N6-acetyllysine; by host PCAF (K28). C30, H33, C34, and C37 together coordinate Zn(2+). The segment at 38-48 (FTKKGLGISYG) is core. The span at 48–58 (GRKKRSQRRRT) shows a compositional bias: basic residues. The segment at 48–93 (GRKKRSQRRRTPQSNKSHQDPLPKQPLSQRLGDQTGQKEQKKTLES) is disordered. The short motif at 49-57 (RKKRSQRRR) is the Nuclear localization signal, RNA-binding (TAR), and protein transduction element. Positions 49-86 (RKKRSQRRRTPQSNKSHQDPLPKQPLSQRLGDQTGQKE) are interaction with the host capping enzyme RNGTT. K50 and K51 each carry N6-acetyllysine; by host EP300 and GCN5L2. Asymmetric dimethylarginine; by host PRMT6 is present on R52. A Glycyl lysine isopeptide (Lys-Gly) (interchain with G-Cter in ubiquitin) cross-link involves residue K71. The span at 73–82 (PLSQRLGDQT) shows a compositional bias: polar residues. The span at 83-93 (GQKEQKKTLES) shows a compositional bias: basic and acidic residues.

Belongs to the lentiviruses Tat family. As to quaternary structure, interacts with host CCNT1. Associates with the P-TEFb complex composed at least of Tat, P-TEFb (CDK9 and CCNT1), TAR RNA, RNA Pol II. Recruits the HATs CREBBP, TAF1/TFIID, EP300, PCAF and GCN5L2. Interacts with host KAT5/Tip60; this interaction targets the latter to degradation. Interacts with the host deacetylase SIRT1. Interacts with host capping enzyme RNGTT; this interaction stimulates RNGTT. Binds to host KDR, and to the host integrins ITGAV/ITGB3 and ITGA5/ITGB1. Interacts with host KPNB1/importin beta-1 without previous binding to KPNA1/importin alpha-1. Interacts with EIF2AK2. Interacts with host nucleosome assembly protein NAP1L1; this interaction may be required for the transport of Tat within the nucleus, since the two proteins interact at the nuclear rim. Interacts with host C1QBP/SF2P32; this interaction involves lysine-acetylated Tat. Interacts with the host chemokine receptors CCR2, CCR3 and CXCR4. Interacts with host DPP4/CD26; this interaction may trigger an anti-proliferative effect. Interacts with host LDLR. Interacts with the host extracellular matrix metalloproteinase MMP1. Interacts with host PRMT6; this interaction mediates Tat's methylation. Interacts with, and is ubiquitinated by MDM2/Hdm2. Interacts with host PSMC3 and HTATIP2. Interacts with STAB1; this interaction may overcome SATB1-mediated repression of IL2 and IL2RA (interleukin) in T cells by binding to the same domain than HDAC1. Interacts (when acetylated) with human CDK13, thereby increasing HIV-1 mRNA splicing and promoting the production of the doubly spliced HIV-1 protein Nef. Interacts with host TBP; this interaction modulates the activity of transcriptional pre-initiation complex. Interacts with host RELA. In terms of processing, asymmetrical arginine methylation by host PRMT6 seems to diminish the transactivation capacity of Tat and affects the interaction with host CCNT1. Acetylation by EP300, CREBBP, GCN5L2/GCN5 and PCAF regulates the transactivation activity of Tat. EP300-mediated acetylation of Lys-50 promotes dissociation of Tat from the TAR RNA through the competitive binding to PCAF's bromodomain. In addition, the non-acetylated Tat's N-terminus can also interact with PCAF. PCAF-mediated acetylation of Lys-28 enhances Tat's binding to CCNT1. Lys-50 is deacetylated by SIRT1. Post-translationally, polyubiquitination by host MDM2 does not target Tat to degradation, but activates its transactivation function and fosters interaction with CCNT1 and TAR RNA. In terms of processing, phosphorylated by EIF2AK2 on serine and threonine residues adjacent to the basic region important for TAR RNA binding and function. Phosphorylation of Tat by EIF2AK2 is dependent on the prior activation of EIF2AK2 by dsRNA.

It localises to the host nucleus. Its subcellular location is the host nucleolus. It is found in the host cytoplasm. The protein localises to the secreted. Its function is as follows. Transcriptional activator that increases RNA Pol II processivity, thereby increasing the level of full-length viral transcripts. Recognizes a hairpin structure at the 5'-LTR of the nascent viral mRNAs referred to as the transactivation responsive RNA element (TAR) and recruits the cyclin T1-CDK9 complex (P-TEFb complex) that will in turn hyperphosphorylate the RNA polymerase II to allow efficient elongation. The CDK9 component of P-TEFb and other Tat-activated kinases hyperphosphorylate the C-terminus of RNA Pol II that becomes stabilized and much more processive. Other factors such as HTATSF1/Tat-SF1, SUPT5H/SPT5, and HTATIP2 are also important for Tat's function. Besides its effect on RNA Pol II processivity, Tat induces chromatin remodeling of proviral genes by recruiting the histone acetyltransferases (HATs) CREBBP, EP300 and PCAF to the chromatin. This also contributes to the increase in proviral transcription rate, especially when the provirus integrates in transcriptionally silent region of the host genome. To ensure maximal activation of the LTR, Tat mediates nuclear translocation of NF-kappa-B by interacting with host RELA. Through its interaction with host TBP, Tat may also modulate transcription initiation. Tat can reactivate a latently infected cell by penetrating in it and transactivating its LTR promoter. In the cytoplasm, Tat is thought to act as a translational activator of HIV-1 mRNAs. Extracellular circulating Tat can be endocytosed by surrounding uninfected cells via the binding to several surface receptors such as CD26, CXCR4, heparan sulfate proteoglycans (HSPG) or LDLR. Neurons are rarely infected, but they internalize Tat via their LDLR. Through its interaction with nuclear HATs, Tat is potentially able to control the acetylation-dependent cellular gene expression. Modulates the expression of many cellular genes involved in cell survival, proliferation or in coding for cytokines or cytokine receptors. Tat plays a role in T-cell and neurons apoptosis. Tat induced neurotoxicity and apoptosis probably contribute to neuroAIDS. Circulating Tat also acts as a chemokine-like and/or growth factor-like molecule that binds to specific receptors on the surface of the cells, affecting many cellular pathways. In the vascular system, Tat binds to ITGAV/ITGB3 and ITGA5/ITGB1 integrins dimers at the surface of endothelial cells and competes with bFGF for heparin-binding sites, leading to an excess of soluble bFGF. In Pan troglodytes (Chimpanzee), this protein is Protein Tat.